A 549-amino-acid chain; its full sequence is Glucose-6-phosphate isomerase (549 aa).

Residue glutamate 355 is the Proton donor of the active site. Catalysis depends on residues histidine 386 and lysine 514.

The protein belongs to the GPI family.

It is found in the cytoplasm. The enzyme catalyses alpha-D-glucose 6-phosphate = beta-D-fructose 6-phosphate. Its pathway is carbohydrate biosynthesis; gluconeogenesis. It participates in carbohydrate degradation; glycolysis; D-glyceraldehyde 3-phosphate and glycerone phosphate from D-glucose: step 2/4. In terms of biological role, catalyzes the reversible isomerization of glucose-6-phosphate to fructose-6-phosphate. In Salmonella arizonae (strain ATCC BAA-731 / CDC346-86 / RSK2980), this protein is Glucose-6-phosphate isomerase.